The following is a 438-amino-acid chain: Dihydroorotase (438 aa).

Residues histidine 58 and histidine 60 each contribute to the Zn(2+) site. Substrate is bound by residues 60–62 (HLR) and asparagine 92. Zn(2+) contacts are provided by aspartate 152, histidine 179, and histidine 232. Substrate is bound at residue asparagine 278. Zn(2+) is bound at residue aspartate 305. Residue aspartate 305 is part of the active site. Residues histidine 309 and 323–324 (FG) each bind substrate.

This sequence belongs to the metallo-dependent hydrolases superfamily. DHOase family. Class I DHOase subfamily. Zn(2+) is required as a cofactor.

The catalysed reaction is (S)-dihydroorotate + H2O = N-carbamoyl-L-aspartate + H(+). It functions in the pathway pyrimidine metabolism; UMP biosynthesis via de novo pathway; (S)-dihydroorotate from bicarbonate: step 3/3. Catalyzes the reversible cyclization of carbamoyl aspartate to dihydroorotate. This is Dihydroorotase from Leifsonia xyli subsp. xyli (strain CTCB07).